A 198-amino-acid chain; its full sequence is Ribonuclease HII (198 aa).

The RNase H type-2 domain occupies 10–198 (QLVAGVDEVG…PVKRALGLAS (189 aa)). 3 residues coordinate a divalent metal cation: D16, E17, and D108.

Belongs to the RNase HII family. It depends on Mn(2+) as a cofactor. The cofactor is Mg(2+).

The protein localises to the cytoplasm. It carries out the reaction Endonucleolytic cleavage to 5'-phosphomonoester.. Endonuclease that specifically degrades the RNA of RNA-DNA hybrids. The polypeptide is Ribonuclease HII (Shigella dysenteriae serotype 1 (strain Sd197)).